The primary structure comprises 342 residues: Holliday junction branch migration complex subunit RuvB (342 aa).

The interval 1–179 is large ATPase domain (RuvB-L); sequence MTNILSPEKI…FGIPMRLNFY (179 aa). ATP-binding positions include I18, R19, G60, K63, T64, T65, 126-128, R169, Y179, and R216; that span reads EDF. Residue T64 participates in Mg(2+) binding. The tract at residues 180 to 250 is small ATPAse domain (RuvB-S); the sequence is NTEELKKVLN…ISDFGLNRLE (71 aa). Residues 253–342 are head domain (RuvB-H); it reads HIGLDSNDYR…HQFNIFNENE (90 aa). DNA-binding residues include R289, R308, and R313.

This sequence belongs to the RuvB family. As to quaternary structure, homohexamer. Forms an RuvA(8)-RuvB(12)-Holliday junction (HJ) complex. HJ DNA is sandwiched between 2 RuvA tetramers; dsDNA enters through RuvA and exits via RuvB. An RuvB hexamer assembles on each DNA strand where it exits the tetramer. Each RuvB hexamer is contacted by two RuvA subunits (via domain III) on 2 adjacent RuvB subunits; this complex drives branch migration. In the full resolvosome a probable DNA-RuvA(4)-RuvB(12)-RuvC(2) complex forms which resolves the HJ.

The protein resides in the cytoplasm. The catalysed reaction is ATP + H2O = ADP + phosphate + H(+). The RuvA-RuvB-RuvC complex processes Holliday junction (HJ) DNA during genetic recombination and DNA repair, while the RuvA-RuvB complex plays an important role in the rescue of blocked DNA replication forks via replication fork reversal (RFR). RuvA specifically binds to HJ cruciform DNA, conferring on it an open structure. The RuvB hexamer acts as an ATP-dependent pump, pulling dsDNA into and through the RuvAB complex. RuvB forms 2 homohexamers on either side of HJ DNA bound by 1 or 2 RuvA tetramers; 4 subunits per hexamer contact DNA at a time. Coordinated motions by a converter formed by DNA-disengaged RuvB subunits stimulates ATP hydrolysis and nucleotide exchange. Immobilization of the converter enables RuvB to convert the ATP-contained energy into a lever motion, pulling 2 nucleotides of DNA out of the RuvA tetramer per ATP hydrolyzed, thus driving DNA branch migration. The RuvB motors rotate together with the DNA substrate, which together with the progressing nucleotide cycle form the mechanistic basis for DNA recombination by continuous HJ branch migration. Branch migration allows RuvC to scan DNA until it finds its consensus sequence, where it cleaves and resolves cruciform DNA. The chain is Holliday junction branch migration complex subunit RuvB from Rickettsia felis (strain ATCC VR-1525 / URRWXCal2) (Rickettsia azadi).